Consider the following 2789-residue polypeptide: Testis-expressed protein 15 (2789 aa).

The span at 34–46 shows a compositional bias: polar residues; sequence HNNTGSSTVTTSK. Disordered stretches follow at residues 34–99, 169–191, 1063–1166, 2303–2331, and 2351–2379; these read HNNT…SSEV, ENQN…AYTK, FSSK…EHQP, KNIS…DTTV, and KATF…DSLK. Basic and acidic residues predominate over residues 47 to 59; that stretch reads SIKDPRLMRREES. The span at 80–98 shows a compositional bias: polar residues; the sequence is DNVNSEIKSTPSNSASSSE. Residues 170-179 show a composition bias toward basic and acidic residues; it reads NQNHSEEKAQ. A compositionally biased stretch (basic residues) spans 1063 to 1077; the sequence is FSSKRKYDKRRKKRA. Composition is skewed to low complexity over residues 1106–1116 and 1134–1160; these read RKSMASSVSKS and SQLP…NPSL.

This sequence belongs to the TEX15 family. As to quaternary structure, interacts with PIWIL4 and PIWIL2. In terms of tissue distribution, expressed in testis, predominantly in germ cells. Low expression, if any, in ovary. Also expressed in several cancers.

It localises to the cytoplasm. Its subcellular location is the nucleus. In terms of biological role, required during spermatogenesis for normal chromosome synapsis and meiotic recombination in germ cells. Necessary for formation of DMC1 and RAD51 foci on meiotic chromosomes, suggesting a specific role in DNA double-stranded break repair. Essential executor of PIWIL4-piRNA pathway directed transposon DNA methylation and silencing in the male embryonic germ cells. PIWIL4-piRNA binds to nascent transposon transcripts and interacts with TEX15, which may in turn recruit the epigenetic silencing machinery to the transposon loci. Not required for piRNA biosynthesis. The polypeptide is Testis-expressed protein 15 (TEX15) (Homo sapiens (Human)).